Consider the following 561-residue polypeptide: Proline--tRNA ligase (561 aa).

The protein belongs to the class-II aminoacyl-tRNA synthetase family. ProS type 1 subfamily. Homodimer.

The protein resides in the cytoplasm. The enzyme catalyses tRNA(Pro) + L-proline + ATP = L-prolyl-tRNA(Pro) + AMP + diphosphate. Catalyzes the attachment of proline to tRNA(Pro) in a two-step reaction: proline is first activated by ATP to form Pro-AMP and then transferred to the acceptor end of tRNA(Pro). As ProRS can inadvertently accommodate and process non-cognate amino acids such as alanine and cysteine, to avoid such errors it has two additional distinct editing activities against alanine. One activity is designated as 'pretransfer' editing and involves the tRNA(Pro)-independent hydrolysis of activated Ala-AMP. The other activity is designated 'posttransfer' editing and involves deacylation of mischarged Ala-tRNA(Pro). The misacylated Cys-tRNA(Pro) is not edited by ProRS. This is Proline--tRNA ligase from Wigglesworthia glossinidia brevipalpis.